A 142-amino-acid chain; its full sequence is Large ribosomal subunit protein uL11 (142 aa).

This sequence belongs to the universal ribosomal protein uL11 family. Part of the ribosomal stalk of the 50S ribosomal subunit. Interacts with L10 and the large rRNA to form the base of the stalk. L10 forms an elongated spine to which L12 dimers bind in a sequential fashion forming a multimeric L10(L12)X complex. Post-translationally, one or more lysine residues are methylated.

Forms part of the ribosomal stalk which helps the ribosome interact with GTP-bound translation factors. The polypeptide is Large ribosomal subunit protein uL11 (Methylocella silvestris (strain DSM 15510 / CIP 108128 / LMG 27833 / NCIMB 13906 / BL2)).